A 265-amino-acid chain; its full sequence is Aquaporin-5 (265 aa).

At 1 to 12 (MKKEVCSVAFFK) the chain is on the cytoplasmic side. The helical transmembrane segment at 13–33 (AVFAEFLATLIFVFFGLGSAL) threads the bilayer. The Extracellular portion of the chain corresponds to 34–39 (KWPSAL). A helical transmembrane segment spans residues 40–60 (PTILQISIAFGLAIGTLAQAL). Residues 61-65 (GPVSG) lie on the Cytoplasmic side of the membrane. Residues 66-74 (GHINPAITL) constitute an intramembrane region (discontinuously helical). Positions 69-71 (NPA) match the NPA 1 motif. Residues 75 to 87 (ALLIGNQISLLRA) are Cytoplasmic-facing. The helical transmembrane segment at 88–108 (IFYVAAQLVGAIAGAGILYWL) threads the bilayer. The Extracellular segment spans residues 109 to 126 (APGNARGNLAVNALSNNT). Asparagine 124 is a glycosylation site (N-linked (GlcNAc...) asparagine). A helical transmembrane segment spans residues 127–147 (TPGKAVVVELILTFQLALCIF). At 148-158 (SSTDSRRTSPV) the chain is on the cytoplasmic side. A helical transmembrane segment spans residues 159-179 (GSPALSIGLSVTLGHLVGIYF). A topological domain (extracellular) is located at residue threonine 180. Positions 181–191 (GCSMNPARSFG) form an intramembrane region, discontinuously helical. The NPA 2 signature appears at 185–187 (NPA). Over 192–203 (PAVVMNRFSPSH) the chain is Extracellular. Residues 204–224 (WVFWVGPIVGAVLAAILYFYL) traverse the membrane as a helical segment. Topologically, residues 225-265 (LFPSSLSLHDRVAVVKGTYEPEEDWEDHREERKKTIELTAH) are cytoplasmic.

This sequence belongs to the MIP/aquaporin (TC 1.A.8) family. In terms of assembly, homotetramer; each monomer provides an independent water pore. Interacts with TRPV4; the interaction is probably indirect and regulates TRPV4 activation by hypotonicity. As to expression, detected at the luminal membrane of secretory epithelial cells in hindpaw sweat glands. Detected in acinar cells in salivary glands, in duct cells in lacrimal glands and in lung (at protein level). Detected in lung, parotid, submandibular, sublingual, and lacrimal gland tissues.

It localises to the apical cell membrane. The protein resides in the cell membrane. It is found in the cytoplasmic vesicle membrane. The catalysed reaction is H2O(in) = H2O(out). Its function is as follows. Aquaporins form homotetrameric transmembrane channels, with each monomer independently mediating water transport across the plasma membrane along its osmotic gradient. Plays an important role in fluid secretion in salivary glands. Required for TRPV4 activation by hypotonicity. Together with TRPV4, controls regulatory volume decrease in salivary epithelial cells. Seems to play a redundant role in water transport in the eye, lung and in sweat glands. The chain is Aquaporin-5 from Mus musculus (Mouse).